Reading from the N-terminus, the 527-residue chain is GMP synthase [glutamine-hydrolyzing] (527 aa).

The region spanning 11-209 (RILILDFGSQ…VLNICGCENL (199 aa)) is the Glutamine amidotransferase type-1 domain. Cys88 functions as the Nucleophile in the catalytic mechanism. Residues His183 and Glu185 contribute to the active site. The GMPS ATP-PPase domain maps to 210–402 (WTSANIIEDA…LGLPYNMLYR (193 aa)). ATP is bound at residue 237 to 243 (SGGVDSS).

As to quaternary structure, homodimer.

It catalyses the reaction XMP + L-glutamine + ATP + H2O = GMP + L-glutamate + AMP + diphosphate + 2 H(+). Its pathway is purine metabolism; GMP biosynthesis; GMP from XMP (L-Gln route): step 1/1. Its function is as follows. Catalyzes the synthesis of GMP from XMP. This chain is GMP synthase [glutamine-hydrolyzing], found in Photobacterium profundum (strain SS9).